A 153-amino-acid chain; its full sequence is NADPH-dependent 7-cyano-7-deazaguanine reductase (153 aa).

The interval 1-22 is disordered; it reads MTDNRYDNLGQLGTSTPLPDNP. Residue cysteine 51 is the Thioimide intermediate of the active site. Aspartate 58 serves as the catalytic Proton donor. Substrate is bound by residues 73-75 and 92-93; these read VES and HE.

This sequence belongs to the GTP cyclohydrolase I family. QueF type 1 subfamily.

It localises to the cytoplasm. The catalysed reaction is 7-aminomethyl-7-carbaguanine + 2 NADP(+) = 7-cyano-7-deazaguanine + 2 NADPH + 3 H(+). It functions in the pathway tRNA modification; tRNA-queuosine biosynthesis. Catalyzes the NADPH-dependent reduction of 7-cyano-7-deazaguanine (preQ0) to 7-aminomethyl-7-deazaguanine (preQ1). The polypeptide is NADPH-dependent 7-cyano-7-deazaguanine reductase (Maricaulis maris (strain MCS10) (Caulobacter maris)).